The chain runs to 157 residues: MKNEDSTQIFEVFVDADSCPVKDEIELVAESYKVKVTFVSSYAHNMTVGPTSKVVMVDAEREAVDLYIANHIKKKDVCVTHDYGLASLLLTKGATVISPRGQMFDHTIIDSLLAQRHQSQKDRRAGKKTKGPRAYLKGDRERFIQQFEKILSNRAGI.

It belongs to the UPF0178 family.

The polypeptide is UPF0178 protein BH1374 (Halalkalibacterium halodurans (strain ATCC BAA-125 / DSM 18197 / FERM 7344 / JCM 9153 / C-125) (Bacillus halodurans)).